We begin with the raw amino-acid sequence, 617 residues long: Melatonin-related receptor (617 aa).

The Extracellular segment spans residues 1-30; the sequence is MGPTLAVPTPYGCIGCKLPQPEYPPALIIF. Residues 31–51 form a helical membrane-spanning segment; sequence MFCAMVITIVVDLIGNSMVIL. At 52–64 the chain is on the cytoplasmic side; the sequence is AVTKNKKLRNSGN. Residues 65-85 form a helical membrane-spanning segment; it reads IFVVSLSVADMLVAIYPYPLM. At 86 to 103 the chain is on the extracellular side; that stretch reads LHAMSIGGWDLSQLQCQM. Cysteine 101 and cysteine 178 are oxidised to a cystine. A helical transmembrane segment spans residues 104–124; it reads VGFITGLSVVGSIFNIVAIAI. The Cytoplasmic segment spans residues 125–143; that stretch reads NRYCYICHSLQYERIFSVR. Residues 144 to 164 form a helical membrane-spanning segment; that stretch reads NTCIYLVITWIMTVLAVLPNM. The Extracellular portion of the chain corresponds to 165 to 188; it reads YIGTIEYDPRTYTCIFNYLNNPVF. Residues 189–209 form a helical membrane-spanning segment; sequence TVTIVCIHFVLPLLIVGFCYV. The Cytoplasmic portion of the chain corresponds to 210–239; that stretch reads RIWTKVLAARDPAGQNPDNQLAEVRNFLTM. The chain crosses the membrane as a helical span at residues 240–260; the sequence is FVIFLLFAVCWCPINVLTVLV. The Extracellular segment spans residues 261–273; sequence AVSPKEMAGKIPN. The helical transmembrane segment at 274 to 294 threads the bilayer; sequence WLYLAAYFIAYFNSCLNAVIY. The Cytoplasmic portion of the chain corresponds to 295 to 617; the sequence is GLLNENFRRE…VEDDPDEMAV (323 aa). Disordered regions lie at residues 340–438 and 464–596; these read AHAR…ATVY and SVHF…VTTS. Positions 341–353 are enriched in basic and acidic residues; it reads HARDQAREQDRAH. The span at 485 to 500 shows a compositional bias: polar residues; the sequence is GSHSKSAFSAATSHPK.

The protein belongs to the G-protein coupled receptor 1 family. As to quaternary structure, homodimer, and heterodimer with MTNR1A and MTNR1B. Interacts with KAT5. Interacts with RTN4 isoform A/NOGO-A. Interacts with TGFBR1. Interacts with GTF2I. In terms of processing, cleaved by CAPN1 in a calcium-dependent manner. Hypothalamus and pituitary.

Its subcellular location is the cell membrane. The protein localises to the postsynaptic density. The protein resides in the nucleus. Functionally, g protein-coupled receptor that plays a role in numerous physiological processes including regulation of energy metabolism, neurite outgrowth or cell migration. Promotes self-renewal and neuronal differentiation of neural progenitor cells through activation of the NOTCH and WNT/beta-catenin signaling pathways. Modulates the KAT5-dependent glucocorticoid receptor signaling by modulating KAT5 subcellular compartmentalisation. Also plays a role in the activation TGFBR1 in the absence of TGFBR2 by interfering with FKBP1A binding to TGFBR1, leading to induction of both canonical and non-canonical SMAD signaling pathways resulting in inhibition of proliferation or promotion of migration. Upon cleavage by CAPN1, functions as a scaffold in the nucleus for interacting partners such as GTF2I to promote FOS promoter activation. The chain is Melatonin-related receptor (GPR50) from Homo sapiens (Human).